The primary structure comprises 342 residues: GTPase Obg (342 aa).

Residues Met-1 to Leu-159 enclose the Obg domain. The region spanning Ala-160–Asp-330 is the OBG-type G domain. GTP is bound by residues Gly-166–Ser-173, Phe-191–Ile-195, Asp-213–Gly-216, Asn-280–Asp-283, and Ser-311–Val-313. Residues Ser-173 and Thr-193 each contribute to the Mg(2+) site.

It belongs to the TRAFAC class OBG-HflX-like GTPase superfamily. OBG GTPase family. As to quaternary structure, monomer. It depends on Mg(2+) as a cofactor.

It localises to the cytoplasm. An essential GTPase which binds GTP, GDP and possibly (p)ppGpp with moderate affinity, with high nucleotide exchange rates and a fairly low GTP hydrolysis rate. Plays a role in control of the cell cycle, stress response, ribosome biogenesis and in those bacteria that undergo differentiation, in morphogenesis control. In Nostoc punctiforme (strain ATCC 29133 / PCC 73102), this protein is GTPase Obg.